Here is a 354-residue protein sequence, read N- to C-terminus: Glutamine synthetase cytosolic isozyme 1-3 (354 aa).

N-acetylserine is present on Ser-2. Phosphoserine is present on residues Ser-2 and Ser-48. In terms of domain architecture, GS beta-grasp spans 19-99 (IIAEYIWIGG…VMCDAYTPAG (81 aa)). Positions 106 to 354 (KRHNAAKIFS…SMIAETTILG (249 aa)) constitute a GS catalytic domain.

The protein belongs to the glutamine synthetase family. In terms of assembly, homooctamer. As to expression, expressed in the pericycle in the region of mature root.

It is found in the cytoplasm. It carries out the reaction L-glutamate + NH4(+) + ATP = L-glutamine + ADP + phosphate + H(+). Functionally, low-affinity glutamine synthetase. May contribute to the homeostatic control of glutamine synthesis in roots. The sequence is that of Glutamine synthetase cytosolic isozyme 1-3 (GLN1-3) from Arabidopsis thaliana (Mouse-ear cress).